We begin with the raw amino-acid sequence, 446 residues long: Probable D-serine dehydratase (446 aa).

Lys-116 carries the post-translational modification N6-(pyridoxal phosphate)lysine.

Belongs to the serine/threonine dehydratase family. DsdA subfamily. The cofactor is pyridoxal 5'-phosphate.

It catalyses the reaction D-serine = pyruvate + NH4(+). In Bacillus thuringiensis (strain Al Hakam), this protein is Probable D-serine dehydratase.